The chain runs to 263 residues: NH(3)-dependent NAD(+) synthetase (263 aa).

ATP is bound at residue 29–36; it reads GISGGIDS. Position 35 (Asp35) interacts with Mg(2+). Residue Arg114 participates in deamido-NAD(+) binding. Thr134 provides a ligand contact to ATP. A Mg(2+)-binding site is contributed by Glu139. Lys147 and Asp154 together coordinate deamido-NAD(+). ATP-binding residues include Lys163 and Ser185. Residue 244 to 245 coordinates deamido-NAD(+); it reads HK.

The protein belongs to the NAD synthetase family. In terms of assembly, homodimer.

The enzyme catalyses deamido-NAD(+) + NH4(+) + ATP = AMP + diphosphate + NAD(+) + H(+). It functions in the pathway cofactor biosynthesis; NAD(+) biosynthesis; NAD(+) from deamido-NAD(+) (ammonia route): step 1/1. Functionally, catalyzes the ATP-dependent amidation of deamido-NAD to form NAD. Uses ammonia as a nitrogen source. This is NH(3)-dependent NAD(+) synthetase from Methanococcoides burtonii (strain DSM 6242 / NBRC 107633 / OCM 468 / ACE-M).